The chain runs to 338 residues: Nicotinate-nucleotide--dimethylbenzimidazole phosphoribosyltransferase (338 aa).

The Proton acceptor role is filled by E305.

It belongs to the CobT family.

The catalysed reaction is 5,6-dimethylbenzimidazole + nicotinate beta-D-ribonucleotide = alpha-ribazole 5'-phosphate + nicotinate + H(+). The protein operates within nucleoside biosynthesis; alpha-ribazole biosynthesis; alpha-ribazole from 5,6-dimethylbenzimidazole: step 1/2. Its function is as follows. Catalyzes the synthesis of alpha-ribazole-5'-phosphate from nicotinate mononucleotide (NAMN) and 5,6-dimethylbenzimidazole (DMB). The polypeptide is Nicotinate-nucleotide--dimethylbenzimidazole phosphoribosyltransferase (Rhizobium leguminosarum bv. trifolii (strain WSM2304)).